The following is a 365-amino-acid chain: Flavone synthase (365 aa).

Fe cation contacts are provided by histidine 76, histidine 218, aspartate 220, and histidine 276. Residues 194 to 295 (MEQKVLINYY…RLSIATFQNP (102 aa)) enclose the Fe2OG dioxygenase domain. The tract at residues 345–365 (RLQDEKAKLEMKSKSADENLA) is disordered.

This sequence belongs to the iron/ascorbate-dependent oxidoreductase family. Fe cation serves as cofactor. It depends on L-ascorbate as a cofactor.

The protein resides in the cytoplasm. It carries out the reaction a flavanone + 2-oxoglutarate + O2 = a flavone + succinate + CO2 + H2O. It functions in the pathway secondary metabolite biosynthesis; flavonoid biosynthesis. In terms of biological role, involved in the conversion of naringenin to apigenin. Acts via a direct 2,3-desaturation of flavanones instead of a sequential hydroxylation/dehydratation mechanism. The polypeptide is Flavone synthase (FNSI) (Petroselinum crispum (Parsley)).